Reading from the N-terminus, the 338-residue chain is Lipoate-protein ligase A (338 aa).

Residues 29-216 form the BPL/LPL catalytic domain; sequence PATQRVLFLW…AFFAHYGERV (188 aa). ATP-binding positions include Arg-71, 76–79, and Lys-134; that span reads GAVF. Lys-134 provides a ligand contact to (R)-lipoate.

The protein belongs to the LplA family. Monomer.

It is found in the cytoplasm. The enzyme catalyses L-lysyl-[lipoyl-carrier protein] + (R)-lipoate + ATP = N(6)-[(R)-lipoyl]-L-lysyl-[lipoyl-carrier protein] + AMP + diphosphate + H(+). Its pathway is protein modification; protein lipoylation via exogenous pathway; protein N(6)-(lipoyl)lysine from lipoate: step 1/2. The protein operates within protein modification; protein lipoylation via exogenous pathway; protein N(6)-(lipoyl)lysine from lipoate: step 2/2. Catalyzes both the ATP-dependent activation of exogenously supplied lipoate to lipoyl-AMP and the transfer of the activated lipoyl onto the lipoyl domains of lipoate-dependent enzymes. The protein is Lipoate-protein ligase A of Escherichia coli O139:H28 (strain E24377A / ETEC).